The chain runs to 231 residues: Large ribosomal subunit protein uL1 (231 aa).

This sequence belongs to the universal ribosomal protein uL1 family. Part of the 50S ribosomal subunit.

Functionally, binds directly to 23S rRNA. The L1 stalk is quite mobile in the ribosome, and is involved in E site tRNA release. Its function is as follows. Protein L1 is also a translational repressor protein, it controls the translation of the L11 operon by binding to its mRNA. The polypeptide is Large ribosomal subunit protein uL1 (Pseudomonas savastanoi pv. phaseolicola (strain 1448A / Race 6) (Pseudomonas syringae pv. phaseolicola (strain 1448A / Race 6))).